An 874-amino-acid polypeptide reads, in one-letter code: Alanine--tRNA ligase (874 aa).

Zn(2+)-binding residues include His564, His568, Cys665, and His669.

The protein belongs to the class-II aminoacyl-tRNA synthetase family. The cofactor is Zn(2+).

It is found in the cytoplasm. The catalysed reaction is tRNA(Ala) + L-alanine + ATP = L-alanyl-tRNA(Ala) + AMP + diphosphate. Catalyzes the attachment of alanine to tRNA(Ala) in a two-step reaction: alanine is first activated by ATP to form Ala-AMP and then transferred to the acceptor end of tRNA(Ala). Also edits incorrectly charged Ser-tRNA(Ala) and Gly-tRNA(Ala) via its editing domain. This Burkholderia lata (strain ATCC 17760 / DSM 23089 / LMG 22485 / NCIMB 9086 / R18194 / 383) protein is Alanine--tRNA ligase.